Here is a 387-residue protein sequence, read N- to C-terminus: Oxidase FUB9 (387 aa).

A disordered region spans residues 1 to 20; the sequence is MSRTNLPIQPAKMSDATSSK. The 362-residue stretch at 18 to 379 folds into the FMN hydroxy acid dehydrogenase domain; it reads SSKPQIFSIQ…TPAHLSILNA (362 aa). Tyrosine 44 serves as a coordination point for a 2-oxocarboxylate. Residues serine 126, glutamine 150, and threonine 178 each coordinate FMN. Arginine 187 serves as a coordination point for a 2-oxocarboxylate. Lysine 250 contacts FMN. The active-site Proton acceptor is the histidine 274. A 2-oxocarboxylate is bound at residue arginine 277. FMN contacts are provided by residues 305–309 and 328–329; these read DGGFR and GR.

Belongs to the FMN-dependent alpha-hydroxy acid dehydrogenase family. Requires FMN as cofactor.

It functions in the pathway mycotoxin biosynthesis. Its function is as follows. Oxidase; part of the gene cluster that mediates the biosynthesis of fusaric acid, a mycotoxin with low to moderate toxicity to animals and humans, but with high phytotoxic properties. L-aspartate is suggested as fusaric acid amino acid precursor that is activated and further processed to O-acetyl-L-homoserine by cluster enzymes aspartate kinase FUB3 and homoserine O-acetyltransferase FUB5, as well as enzymes of the primary metabolism. The polyketide synthase (PKS) FUB1 generates the triketide trans-2-hexenal which is presumptively released by the hydrolase FUB4 and linked to the NRPS-bound amino acid precursor by NAD(P)-dependent dehydrogenase FUB6. FUB1, FUB4, and the non-canonical NRPS Fub8 may form an enzyme complex. Further processing of the NRPS-bound intermediate might be carried out by FUB6 and the sulfhydrylase FUB7, enabling a spontaneous electrocyclization to close the carbon backbone of fusaric acid. Dihydrofusaric acid is likely to be released via reduction by the thioester reductase (TR) domain of FUB8 whereupon the final oxidation to fusaric acid may (also) be performed by the FMN-dependent dehydrogenase FUB9. In Fusarium oxysporum f. sp. lycopersici (strain 4287 / CBS 123668 / FGSC 9935 / NRRL 34936) (Fusarium vascular wilt of tomato), this protein is Oxidase FUB9.